Consider the following 281-residue polypeptide: Elongation factor Ts (281 aa).

Residues 79–82 are involved in Mg(2+) ion dislocation from EF-Tu; it reads TDFV.

Belongs to the EF-Ts family.

Its subcellular location is the cytoplasm. Functionally, associates with the EF-Tu.GDP complex and induces the exchange of GDP to GTP. It remains bound to the aminoacyl-tRNA.EF-Tu.GTP complex up to the GTP hydrolysis stage on the ribosome. This chain is Elongation factor Ts, found in Wolbachia pipientis subsp. Culex pipiens (strain wPip).